A 210-amino-acid polypeptide reads, in one-letter code: LexA repressor (210 aa).

Residues 31-51 (RAEISRELGFRSPNAAEEHLK) constitute a DNA-binding region (H-T-H motif). Active-site for autocatalytic cleavage activity residues include Ser126 and Lys163.

It belongs to the peptidase S24 family. Homodimer.

It catalyses the reaction Hydrolysis of Ala-|-Gly bond in repressor LexA.. In terms of biological role, represses a number of genes involved in the response to DNA damage (SOS response), including recA and lexA. In the presence of single-stranded DNA, RecA interacts with LexA causing an autocatalytic cleavage which disrupts the DNA-binding part of LexA, leading to derepression of the SOS regulon and eventually DNA repair. This chain is LexA repressor, found in Actinobacillus succinogenes (strain ATCC 55618 / DSM 22257 / CCUG 43843 / 130Z).